The primary structure comprises 707 residues: Leucine-rich repeat neuronal protein 3 (707 aa).

The N-terminal stretch at 1 to 22 (MKDTPLQVHVLLGLAITTLVQA) is a signal peptide. Positions 23 to 69 (IDKKVDCPQLCTCEIRPWFTPRSIYMEASTVDCNDLGLLNFPARLPA) constitute an LRRNT domain. Residues 23 to 626 (IDKKVDCPQL…DGKEYGKNHT (604 aa)) are Extracellular-facing. 12 LRR repeats span residues 70 to 91 (DTQI…TDFP), 93 to 114 (NLTG…NVQK), 117 to 138 (QLLS…CLYG), 141 to 162 (NLQE…AFIG), 165 to 186 (NLLR…WFDA), 189 to 210 (NLEI…NFQP), 213 to 234 (KLRS…ALAG), 237 to 258 (NLES…ALQK), 261 to 282 (NLKF…DFSN), 285 to 304 (HLKE…DSLA), 310 to 332 (DLRK…AFFR), and 335 to 358 (KLES…ESLP). 2 N-linked (GlcNAc...) asparagine glycosylation sites follow: Asn-93 and Asn-103. The N-linked (GlcNAc...) asparagine glycan is linked to Asn-223. One can recognise an LRRCT domain in the interval 368-421 (NPIRCDCVIRWINMNKTNIRFMEPDSLFCVDPPEFQGQNVRQVHFRDMMEICLP). Residue Asn-382 is glycosylated (N-linked (GlcNAc...) asparagine). The Ig-like C2-type domain maps to 421 to 514 (PLIAPESFPS…DLKSIMIKVG (94 aa)). Cys-444 and Cys-496 are disulfide-bonded. N-linked (GlcNAc...) asparagine glycosylation is found at Asn-522, Asn-579, Asn-608, and Asn-624. Residues 523 to 614 (GSLNIKIRDI…QCVNVTTKSL (92 aa)) enclose the Fibronectin type-III domain. Residues 627 to 647 (VFVACVGGLLGIIGVMCLFSC) form a helical membrane-spanning segment. Residues 648-707 (VSQEGSSEGEHSYAVNHCHKPALAFSELYPPLINLWESSKEKRATLEVKATAIGVPTNMS) lie on the Cytoplasmic side of the membrane.

Expressed in the brain, in Stronger expression in the ventricular zone and anlage of thalamus, spinal cord, and dorsal root ganglion in 11-17 dpc cerebellum and cerebral cortex in adults.

Its subcellular location is the membrane. This chain is Leucine-rich repeat neuronal protein 3 (Lrrn3), found in Mus musculus (Mouse).